A 296-amino-acid chain; its full sequence is (3R)-3-[(carboxymethyl)amino]fatty acid oxygenase/decarboxylase (296 aa).

The (3R)-3-[(carboxymethyl)amino]butanoate site is built by Tyr-66, Tyr-71, and Gly-98. (3R)-3-{[carboxy(hydroxy)methyl]amino}butanoate contacts are provided by Tyr-66, Tyr-71, and Gly-98. Residues His-102 and Asp-104 each coordinate Fe(2+). Residues Tyr-105 and Lys-163 each contribute to the (3R)-3-[(carboxymethyl)amino]butanoate site. (3R)-3-{[carboxy(hydroxy)methyl]amino}butanoate-binding residues include Tyr-105 and Lys-163. Residue His-265 participates in Fe(2+) binding. His-269 contributes to the 2-oxoglutarate binding site. Arg-280 lines the (3R)-3-[(carboxymethyl)amino]butanoate pocket. Arg-280 is a binding site for (3R)-3-{[carboxy(hydroxy)methyl]amino}butanoate.

Belongs to the TfdA dioxygenase family. Requires Fe(2+) as cofactor.

The catalysed reaction is a (3R)-3-[(carboxymethyl)amino]fatty acid + 2 2-oxoglutarate + 2 O2 = a (3R)-3-isocyanyl-fatty acid + 2 succinate + 3 CO2 + 2 H2O. It carries out the reaction a (3R)-3-[(carboxymethyl)amino]fatty acid + 2-oxoglutarate + O2 = a (3R)-3-{[carboxy(hydroxy)methyl]amino}fatty acid + succinate + CO2. It catalyses the reaction a (3R)-3-{[carboxy(hydroxy)methyl]amino}fatty acid + 2-oxoglutarate + O2 = a (3R)-3-isocyanyl-fatty acid + succinate + 2 CO2 + 2 H2O. The enzyme catalyses (3R)-3-[(carboxymethyl)amino]butanoate + 2 2-oxoglutarate + 2 O2 = (3R)-3-isocyanylbutanoate + 2 succinate + 3 CO2 + 2 H2O. The catalysed reaction is (3R)-3-[(carboxymethyl)amino]butanoate + 2-oxoglutarate + O2 = (3R)-3-{[carboxy(hydroxy)methyl]amino}butanoate + succinate + CO2. It carries out the reaction (3R)-3-{[carboxy(hydroxy)methyl]amino}butanoate + 2-oxoglutarate + O2 = (3R)-3-isocyanylbutanoate + succinate + 2 CO2 + 2 H2O. Involved in the biosynthesis of a unique class of isonitrile lipopeptides (INLPs). Catalyzes the conversion of (3R)-3-[(carboxymethyl)amino]fatty acids such as (3R)-3-[(carboxymethyl)amino]butanoate (CABA) to (3R)-3-isocyanylbutanoate (INBA) through an oxidative decarboxylation mechanism, thereby generating the isonitrile group of INLPs. This Streptomyces coeruleorubidus protein is (3R)-3-[(carboxymethyl)amino]fatty acid oxygenase/decarboxylase.